A 2477-amino-acid chain; its full sequence is Spectrin alpha chain, non-erythrocytic 1 (2477 aa).

An N-terminal domain region spans residues 1–14; that stretch reads MDPSGVKVLETAED. Spectrin repeat units follow at residues 45–146, 150–251, 256–358, 361–465, 468–570, 574–676, 679–781, 785–888, 891–969, and 1096–1162; these read RFQF…VKLL, KLVQ…QGKL, EVQR…ARLN, YRLQ…QYEQ, DLQL…AQLA, HLQQ…KLRE, QQQQ…QKLA, RLQQ…DLED, QAQQ…ETGK, and LFRE…SEGL. One can recognise an SH3 domain in the interval 967–1026; the sequence is TGKELVLALYDYQEKSPREVTMKKGDILTLLNSTNKDWWKVEVNDRQGFVPAAYVKKLDP. At Y1176 the chain carries Phosphotyrosine. 10 Spectrin repeats span residues 1234-1336, 1339-1442, 1446-1549, 1552-1661, 1664-1767, 1769-1873, 1876-1979, 1983-2086, 2097-2199, and 2211-2315; these read EVQR…EKLG, HDLQ…MMLD, ELQL…KLGE, TLQQ…KLKE, KQQN…KLNE, HRLH…RLEE, EYQQ…KLDE, FLQF…KLLE, LFLT…LELQ, and LRQE…NLEQ. Residues 2257–2477 form a C-terminal domain region; it reads HQEIRAMRSQ…IEFTRSLFVN (221 aa). EF-hand domains lie at 2328-2363, 2371-2406, and 2409-2444; these read EALKEFSMMFKHFDKDKSGRLNHQEFKSCLRSLGYD, EPDPEFESILDTVDPNRDGHVSLQEYMAFMISRETE, and KSSEEIESAFRALSSERKPYVTKEELYQNLTREQAD. Positions 2341, 2343, 2345, 2347, 2352, 2384, 2386, 2388, 2390, and 2395 each coordinate Ca(2+).

The protein belongs to the spectrin family. Like erythrocyte spectrin, the spectrin-like proteins are capable of forming dimers which can further associate to tetramers. Interacts with ACP1. In terms of processing, phosphorylation of Tyr-1176 decreases sensitivity to cleavage by calpain in vitro.

It is found in the cytoplasm. The protein localises to the cytoskeleton. The protein resides in the cell cortex. Morphologically, spectrin-like proteins appear to be related to spectrin, showing a flexible rod-like structure. They can bind actin but seem to differ in their calmodulin-binding activity. In nonerythroid tissues, spectrins, in association with some other proteins, may play an important role in membrane organization. This is Spectrin alpha chain, non-erythrocytic 1 (SPTAN1) from Gallus gallus (Chicken).